The following is a 475-amino-acid chain: MMEFNERPFHFIGIGGIGMSALAYILAKKGLRVSGSDLRPNRLTEQLAELGVQIFIGQSAANLERYPFTPLPQVICSSAIRSDNPEYLAAQHLGCPIFHRSDVLAALMHRSQSIAVAGTHGKTTTSSMIAYLLLQAGLDPTIIVGGEVAAWQGNARVGQSRYLVAEADESDGSLRKFHPHIGVITNIELDHPDHYNSLEEVVATFQQFADQAEIVIACADCPNIRDRLHHPRLLTYSLQRQAAVDYCVDHIQYTAEGTTARVWERGTSLGILQLNVLGAHNLQNALAVIAVGRYLGIDFATIAAALLEFRGARRRFEERGQVNGIRFIDDYAHHPSEIMATLEAARLQVGTQTPWQRIVAVFQPHRYSRTQTLLKAFGQCFTAADHVIFTDIYSAGEPDPGTISGADVATCARQYHASVDYCPTLEAVQTRLAHLLQPGDLVIFLGAGNLNQLIPSVMADQEQFSVSSLTEAIAL.

118-124 provides a ligand contact to ATP; that stretch reads GTHGKTT.

It belongs to the MurCDEF family.

Its subcellular location is the cytoplasm. It carries out the reaction UDP-N-acetyl-alpha-D-muramate + L-alanine + ATP = UDP-N-acetyl-alpha-D-muramoyl-L-alanine + ADP + phosphate + H(+). It functions in the pathway cell wall biogenesis; peptidoglycan biosynthesis. Functionally, cell wall formation. The polypeptide is UDP-N-acetylmuramate--L-alanine ligase (Thermosynechococcus vestitus (strain NIES-2133 / IAM M-273 / BP-1)).